A 218-amino-acid chain; its full sequence is Adenylate kinase (218 aa).

Glycine 10–threonine 15 is an ATP binding site. The tract at residues serine 30 to valine 59 is NMP. AMP-binding positions include threonine 31, arginine 36, glutamate 57–valine 59, glycine 85–arginine 88, and glutamine 92. An LID region spans residues glycine 126 to aspartate 164. ATP is bound at residue arginine 127. Zn(2+)-binding residues include cysteine 130 and cysteine 133. ATP is bound at residue threonine 136 to tyrosine 137. Cysteine 150 and cysteine 153 together coordinate Zn(2+). AMP contacts are provided by arginine 161 and arginine 172. Residue glutamine 200 coordinates ATP.

The protein belongs to the adenylate kinase family. As to quaternary structure, monomer.

It localises to the cytoplasm. The catalysed reaction is AMP + ATP = 2 ADP. The protein operates within purine metabolism; AMP biosynthesis via salvage pathway; AMP from ADP: step 1/1. Functionally, catalyzes the reversible transfer of the terminal phosphate group between ATP and AMP. Plays an important role in cellular energy homeostasis and in adenine nucleotide metabolism. This chain is Adenylate kinase, found in Latilactobacillus sakei subsp. sakei (strain 23K) (Lactobacillus sakei subsp. sakei).